Here is a 288-residue protein sequence, read N- to C-terminus: 33 kDa chaperonin (288 aa).

2 disulfide bridges follow: Cys235/Cys237 and Cys268/Cys271.

The protein belongs to the HSP33 family. Under oxidizing conditions two disulfide bonds are formed involving the reactive cysteines. Under reducing conditions zinc is bound to the reactive cysteines and the protein is inactive.

The protein resides in the cytoplasm. Redox regulated molecular chaperone. Protects both thermally unfolding and oxidatively damaged proteins from irreversible aggregation. Plays an important role in the bacterial defense system toward oxidative stress. This Streptococcus thermophilus (strain CNRZ 1066) protein is 33 kDa chaperonin.